The following is a 386-amino-acid chain: DNA replication and repair protein RecF (386 aa).

30-37 (GANAQGKT) is a binding site for ATP.

Belongs to the RecF family.

Its subcellular location is the cytoplasm. The RecF protein is involved in DNA metabolism; it is required for DNA replication and normal SOS inducibility. RecF binds preferentially to single-stranded, linear DNA. It also seems to bind ATP. This Natranaerobius thermophilus (strain ATCC BAA-1301 / DSM 18059 / JW/NM-WN-LF) protein is DNA replication and repair protein RecF.